Here is a 396-residue protein sequence, read N- to C-terminus: Acetate kinase (396 aa).

Asparagine 8 is a binding site for Mg(2+). Lysine 15 serves as a coordination point for ATP. A substrate-binding site is contributed by arginine 89. Aspartate 146 functions as the Proton donor/acceptor in the catalytic mechanism. ATP-binding positions include histidine 206–glycine 210, aspartate 283–arginine 285, and glycine 331–asparagine 335. Mg(2+) is bound at residue glutamate 383.

This sequence belongs to the acetokinase family. In terms of assembly, homodimer. It depends on Mg(2+) as a cofactor. Requires Mn(2+) as cofactor.

The protein localises to the cytoplasm. It carries out the reaction acetate + ATP = acetyl phosphate + ADP. Its pathway is metabolic intermediate biosynthesis; acetyl-CoA biosynthesis; acetyl-CoA from acetate: step 1/2. In terms of biological role, catalyzes the formation of acetyl phosphate from acetate and ATP. Can also catalyze the reverse reaction. This Streptococcus pneumoniae (strain JJA) protein is Acetate kinase.